Here is a 78-residue protein sequence, read N- to C-terminus: RTX-VII (78 aa).

The N-terminal stretch at 1-22 (MKTIVYLIVSILLLSSTVLVLA) is a signal peptide. Positions 23–40 (EGNAASHELQEYPIEEQR) are excised as a propeptide. 4 disulfides stabilise this stretch: cysteine 42–cysteine 58, cysteine 47–cysteine 63, cysteine 57–cysteine 73, and cysteine 65–cysteine 71. Arginine 76 carries the post-translational modification Arginine amide.

Expressed by the venom gland.

It is found in the secreted. Its function is as follows. Agonist of rat Nav1.3/SCN3A. This toxin increases the peak current amplitude, and potently inhibits the fast inactivation of the channel (EC(50)=120 nM). The inhibition of fast inactivation is voltage-independent (depolarizing voltages ranging from 220 mV to 130 mV). The toxin might bind to the domain IV of the Nav1.3 channel, while domain II might not participate in interacting with the toxin but could determine the efficacy of RTX-VII. In vivo, when intracerebroventricularly injected into mice, the toxin causes involuntary body twitching (seizure-like symptoms). The sequence is that of RTX-VII from Macrothele raveni (Funnel-web spider).